Consider the following 391-residue polypeptide: Nucleosome assembly protein 1-like 1 (391 aa).

The segment covering 1-10 (MADIDNKEQS) has biased composition (basic and acidic residues). The disordered stretch occupies residues 1–32 (MADIDNKEQSELDQDLDDVEEVEEEETGEETK). Ala-2 is modified (N-acetylalanine). Phosphoserine is present on Ser-10. Residues 11–28 (ELDQDLDDVEEVEEEETG) show a composition bias toward acidic residues. A phosphothreonine mark is found at Thr-62 and Thr-64. Residue Ser-69 is modified to Phosphoserine. The residue at position 116 (Lys-116) is an N6-acetyllysine. Positions 125 to 150 (YEPTEEECEWKPDEEDEISEELKEKA) match the NAP1L motif motif. Acidic residues predominate over residues 132 to 143 (CEWKPDEEDEIS). A disordered region spans residues 132–163 (CEWKPDEEDEISEELKEKAKVEDEKKDEEKED). Ser-143 is subject to Phosphoserine. Basic and acidic residues predominate over residues 144–163 (EELKEKAKVEDEKKDEEKED). The short motif at 273–279 (IKKKQKH) is the Nuclear localization signal element. The segment at 345-391 (EAIEDDDDDYDEEGEEADEEGEEEGDEENDPDYDPKKDQNPAECKQQ) is disordered. The segment covering 346 to 376 (AIEDDDDDYDEEGEEADEEGEEEGDEENDPD) has biased composition (acidic residues). A 5-glutamyl polyglycine mark is found at Glu-359 and Glu-360. Residues 377–391 (YDPKKDQNPAECKQQ) are compositionally biased toward basic and acidic residues. Cys-388 carries the post-translational modification Cysteine methyl ester. Cys-388 carries the S-farnesyl cysteine lipid modification. Positions 389–391 (KQQ) are cleaved as a propeptide — removed in mature form.

The protein belongs to the nucleosome assembly protein (NAP) family. As to quaternary structure, homodimer. The dimer binds strongly and sequentially to single and double H2A-H2B heterodimers. Interacts with ERCC6; this interaction increases ERCC6 processivity. Interacts with RAD54. Interacts with SETD1A. Polyglycylated by TTLL10 on glutamate residues, resulting in polyglycine chains on the gamma-carboxyl group. Both polyglutamylation and polyglycylation modifications can coexist on the same protein on adjacent residues, and lowering polyglycylation levels increases polyglutamylation, and reciprocally. Post-translationally, polyglutamylated by TTLL4 on glutamate residues, resulting in polyglutamate chains on the gamma-carboxyl group. Both polyglutamylation and polyglycylation modifications can coexist on the same protein on adjacent residues, and lowering polyglycylation levels increases polyglutamylation, and reciprocally.

The protein resides in the nucleus. It is found in the melanosome. It localises to the cytoplasm. Histone chaperone that plays a role in the nuclear import of H2A-H2B and nucleosome assembly. Also participates in several important DNA repair mechanisms: greatly enhances ERCC6-mediated chromatin remodeling which is essential for transcription-coupled nucleotide excision DNA repair. Also stimulates homologous recombination (HR) by RAD51 and RAD54 which is essential in mitotic DNA double strand break (DSB) repair. Plays a key role in the regulation of embryonic neurogenesis. Promotes the proliferation of neural progenitors and inhibits neuronal differentiation during cortical development. Regulates neurogenesis via the modulation of RASSF10; regulates RASSF10 expression by promoting SETD1A-mediated H3K4 methylation at the RASSF10 promoter. This Bos taurus (Bovine) protein is Nucleosome assembly protein 1-like 1 (NAP1L1).